Here is a 73-residue protein sequence, read N- to C-terminus: Probable movement protein p8 (73 aa).

Over residues Met1–Leu12 the composition is skewed to polar residues. A disordered region spans residues Met1–Asp48. Residues Glu16–Gln27 show a composition bias toward basic and acidic residues.

It belongs to the carmovirus/necrovirus/panicovirus movement protein p8 family.

Its subcellular location is the host cell wall. In terms of biological role, cell-to-cell movement. This chain is Probable movement protein p8, found in Muhlenbergia (Blackwell switchgrass).